We begin with the raw amino-acid sequence, 295 residues long: Ethanolamine ammonia-lyase small subunit (295 aa).

Residues valine 207, glutamate 228, and cysteine 258 each coordinate adenosylcob(III)alamin.

The protein belongs to the EutC family. As to quaternary structure, the basic unit is a heterodimer which dimerizes to form tetramers. The heterotetramers trimerize; 6 large subunits form a core ring with 6 small subunits projecting outwards. Requires adenosylcob(III)alamin as cofactor.

Its subcellular location is the bacterial microcompartment. The catalysed reaction is ethanolamine = acetaldehyde + NH4(+). It participates in amine and polyamine degradation; ethanolamine degradation. Catalyzes the deamination of various vicinal amino-alcohols to oxo compounds. Allows this organism to utilize ethanolamine as the sole source of nitrogen and carbon in the presence of external vitamin B12. The sequence is that of Ethanolamine ammonia-lyase small subunit from Escherichia coli (strain SE11).